The following is a 771-amino-acid chain: 5-methyltetrahydropteroyltriglutamate--homocysteine methyltransferase (771 aa).

5-methyltetrahydropteroyltri-L-glutamate is bound by residues 16–19 (RELK) and Lys-117. L-homocysteine contacts are provided by residues 443-445 (IGS) and Glu-496. L-methionine-binding positions include 443 to 445 (IGS) and Glu-496. 5-methyltetrahydropteroyltri-L-glutamate contacts are provided by residues 527–528 (RC) and Trp-573. An L-homocysteine-binding site is contributed by Asp-611. Asp-611 provides a ligand contact to L-methionine. Residue Glu-617 coordinates 5-methyltetrahydropteroyltri-L-glutamate. Residues His-653, Cys-655, and Glu-677 each coordinate Zn(2+). Catalysis depends on His-706, which acts as the Proton donor. A Zn(2+)-binding site is contributed by Cys-738.

The protein belongs to the vitamin-B12 independent methionine synthase family. Zn(2+) serves as cofactor.

It carries out the reaction 5-methyltetrahydropteroyltri-L-glutamate + L-homocysteine = tetrahydropteroyltri-L-glutamate + L-methionine. It participates in amino-acid biosynthesis; L-methionine biosynthesis via de novo pathway; L-methionine from L-homocysteine (MetE route): step 1/1. Catalyzes the transfer of a methyl group from 5-methyltetrahydrofolate to homocysteine resulting in methionine formation. The chain is 5-methyltetrahydropteroyltriglutamate--homocysteine methyltransferase from Stutzerimonas stutzeri (strain A1501) (Pseudomonas stutzeri).